A 134-amino-acid chain; its full sequence is Cytochrome c-type biogenesis protein CcmE (134 aa).

The Cytoplasmic portion of the chain corresponds to 1–7 (MKRKYRR). A helical; Signal-anchor for type II membrane protein membrane pass occupies residues 8-28 (LFVVIITLSIFAGSVVLVLGK). The Periplasmic portion of the chain corresponds to 29-134 (LKNNVSFFYT…MPNKYKTNDL (106 aa)). Positions 120 and 124 each coordinate heme.

The protein belongs to the CcmE/CycJ family.

It localises to the cell inner membrane. In terms of biological role, heme chaperone required for the biogenesis of c-type cytochromes. Transiently binds heme delivered by CcmC and transfers the heme to apo-cytochromes in a process facilitated by CcmF and CcmH. In Ehrlichia ruminantium (strain Welgevonden), this protein is Cytochrome c-type biogenesis protein CcmE.